Here is a 470-residue protein sequence, read N- to C-terminus: Nuclear segregation protein BFR1 (470 aa).

Coiled coils occupy residues D17–N178 and N237–K281. Phosphoserine is present on S260. At T336 the chain carries Phosphothreonine. Residues A346–A368 are disordered. Over residues K349 to Q358 the composition is skewed to basic residues. Phosphoserine is present on S369. The stretch at N398–E469 forms a coiled coil. Residues Q447–N470 are disordered.

Implicated in secretion, nuclear segregation and in maintenance of cell size. The chain is Nuclear segregation protein BFR1 (BFR1) from Saccharomyces cerevisiae (strain ATCC 204508 / S288c) (Baker's yeast).